The sequence spans 488 residues: Pup--protein ligase (488 aa).

Glu34 lines the Mg(2+) pocket. Arg77 is a binding site for ATP. Tyr79 serves as a coordination point for Mg(2+). Asp81 serves as the catalytic Proton acceptor. Glu87 is a binding site for Mg(2+). Residues Thr90 and Trp453 each coordinate ATP.

Belongs to the Pup ligase/Pup deamidase family. Pup-conjugating enzyme subfamily.

It carries out the reaction ATP + [prokaryotic ubiquitin-like protein]-L-glutamate + [protein]-L-lysine = ADP + phosphate + N(6)-([prokaryotic ubiquitin-like protein]-gamma-L-glutamyl)-[protein]-L-lysine.. Its pathway is protein degradation; proteasomal Pup-dependent pathway. It participates in protein modification; protein pupylation. Catalyzes the covalent attachment of the prokaryotic ubiquitin-like protein modifier Pup to the proteasomal substrate proteins, thereby targeting them for proteasomal degradation. This tagging system is termed pupylation. The ligation reaction involves the side-chain carboxylate of the C-terminal glutamate of Pup and the side-chain amino group of a substrate lysine. This Bifidobacterium dentium (strain ATCC 27534 / DSM 20436 / JCM 1195 / Bd1) protein is Pup--protein ligase.